Consider the following 69-residue polypeptide: Ribosome modulation factor (69 aa).

This sequence belongs to the ribosome modulation factor family.

It is found in the cytoplasm. In terms of biological role, during stationary phase, converts 70S ribosomes to an inactive dimeric form (100S ribosomes). The sequence is that of Ribosome modulation factor from Chromohalobacter salexigens (strain ATCC BAA-138 / DSM 3043 / CIP 106854 / NCIMB 13768 / 1H11).